A 461-amino-acid polypeptide reads, in one-letter code: Cysteine--tRNA ligase (461 aa).

Residue cysteine 28 coordinates Zn(2+). The short motif at 30-40 (ITVYDLCHIGH) is the 'HIGH' region element. Positions 209, 234, and 238 each coordinate Zn(2+). The 'KMSKS' region motif lies at 266–270 (KMSKS). Lysine 269 contacts ATP.

It belongs to the class-I aminoacyl-tRNA synthetase family. As to quaternary structure, monomer. Requires Zn(2+) as cofactor.

It is found in the cytoplasm. It catalyses the reaction tRNA(Cys) + L-cysteine + ATP = L-cysteinyl-tRNA(Cys) + AMP + diphosphate. The polypeptide is Cysteine--tRNA ligase (Klebsiella pneumoniae (strain 342)).